A 1393-amino-acid polypeptide reads, in one-letter code: RNA polymerase II-associated protein 1 (1393 aa).

Disordered stretches follow at residues 34–53, 61–94, and 266–295; these read KKGN…LQDH, NLPD…PEER, and SHTQ…EEPL. A compositionally biased stretch (pro residues) spans 64–74; that stretch reads DLPPALVPSPP. S72 carries the post-translational modification Phosphoserine. Residue T321 is modified to Phosphothreonine. The disordered stretch occupies residues 496 to 531; it reads PSQEDKEDEDEDEECPAGKAKRKSPEEESRPPPDLA. The segment covering 500 to 510 has biased composition (acidic residues); that stretch reads DKEDEDEDEEC. Positions 518-531 are enriched in basic and acidic residues; it reads KSPEEESRPPPDLA. Phosphoserine is present on S1121.

The protein belongs to the RPAP1 family. In terms of assembly, part of an RNA polymerase II complex that contains POLR2A, POLR2B, POLR2C, POLR2D, POLR2E, POLR2F, POLR2G, POLR2H, POLR2I, POLR2J, POLR2K, POLR2L, RPAP1, FCP1 plus the general transcription factors TFIIB and TFIIF.

The protein resides in the nucleus. Forms an interface between the RNA polymerase II enzyme and chaperone/scaffolding protein, suggesting that it is required to connect RNA polymerase II to regulators of protein complex formation. Required for interaction of the RNA polymerase II complex with acetylated histone H3. This chain is RNA polymerase II-associated protein 1 (RPAP1), found in Homo sapiens (Human).